Here is a 197-residue protein sequence, read N- to C-terminus: NADH-quinone oxidoreductase subunit C (197 aa).

Belongs to the complex I 30 kDa subunit family. NDH-1 is composed of 14 different subunits. Subunits NuoB, C, D, E, F, and G constitute the peripheral sector of the complex.

The protein localises to the cell inner membrane. It catalyses the reaction a quinone + NADH + 5 H(+)(in) = a quinol + NAD(+) + 4 H(+)(out). NDH-1 shuttles electrons from NADH, via FMN and iron-sulfur (Fe-S) centers, to quinones in the respiratory chain. The immediate electron acceptor for the enzyme in this species is believed to be ubiquinone. Couples the redox reaction to proton translocation (for every two electrons transferred, four hydrogen ions are translocated across the cytoplasmic membrane), and thus conserves the redox energy in a proton gradient. The polypeptide is NADH-quinone oxidoreductase subunit C (Neisseria meningitidis serogroup C (strain 053442)).